A 282-amino-acid chain; its full sequence is Nucleotide-binding protein in ptsN-ptsO intergenic region (282 aa).

8-15 is a binding site for ATP; that stretch reads GRSGSGKS. 56 to 59 contributes to the GTP binding site; that stretch reads DVRN.

It belongs to the RapZ-like family.

Its function is as follows. Displays ATPase and GTPase activities. The polypeptide is Nucleotide-binding protein in ptsN-ptsO intergenic region (Shewanella violacea).